The chain runs to 147 residues: Large ribosomal subunit protein uL15 (147 aa).

The interval 1 to 46 is disordered; it reads MSIRLENLSYTPGARKEKHRKGRGHAAGKGKQAGRGQSGQKKRSTV. Over residues 16 to 28 the composition is skewed to basic residues; it reads KEKHRKGRGHAAG.

The protein belongs to the universal ribosomal protein uL15 family. Part of the 50S ribosomal subunit.

In terms of biological role, binds to the 23S rRNA. This chain is Large ribosomal subunit protein uL15, found in Mesomycoplasma hyopneumoniae (strain J / ATCC 25934 / NCTC 10110) (Mycoplasma hyopneumoniae).